The primary structure comprises 345 residues: S-adenosylmethionine:tRNA ribosyltransferase-isomerase (345 aa).

It belongs to the QueA family. As to quaternary structure, monomer.

It is found in the cytoplasm. The enzyme catalyses 7-aminomethyl-7-carbaguanosine(34) in tRNA + S-adenosyl-L-methionine = epoxyqueuosine(34) in tRNA + adenine + L-methionine + 2 H(+). The protein operates within tRNA modification; tRNA-queuosine biosynthesis. Its function is as follows. Transfers and isomerizes the ribose moiety from AdoMet to the 7-aminomethyl group of 7-deazaguanine (preQ1-tRNA) to give epoxyqueuosine (oQ-tRNA). In Shewanella sp. (strain W3-18-1), this protein is S-adenosylmethionine:tRNA ribosyltransferase-isomerase.